Consider the following 400-residue polypeptide: Probable tRNA pseudouridine synthase D (400 aa).

The active-site Nucleophile is aspartate 89. Residues 162–357 enclose the TRUD domain; that stretch reads GVPNYYGLQR…AGGDRKPALL (196 aa).

Belongs to the pseudouridine synthase TruD family.

The catalysed reaction is uridine(13) in tRNA = pseudouridine(13) in tRNA. Its function is as follows. Could be responsible for synthesis of pseudouridine from uracil-13 in transfer RNAs. The polypeptide is Probable tRNA pseudouridine synthase D (Methanopyrus kandleri (strain AV19 / DSM 6324 / JCM 9639 / NBRC 100938)).